We begin with the raw amino-acid sequence, 213 residues long: Thiamine-phosphate synthase (213 aa).

Residues 39–43 and Asp-71 contribute to the 4-amino-2-methyl-5-(diphosphooxymethyl)pyrimidine site; that span reads QYRDK. Mg(2+) contacts are provided by Asp-72 and Asp-91. Residue Ser-108 participates in 4-amino-2-methyl-5-(diphosphooxymethyl)pyrimidine binding. 2-[(2R,5Z)-2-carboxy-4-methylthiazol-5(2H)-ylidene]ethyl phosphate is bound at residue 135–137; the sequence is TDT. Lys-138 serves as a coordination point for 4-amino-2-methyl-5-(diphosphooxymethyl)pyrimidine. Residues Gly-165 and 185 to 186 contribute to the 2-[(2R,5Z)-2-carboxy-4-methylthiazol-5(2H)-ylidene]ethyl phosphate site; that span reads VS.

Belongs to the thiamine-phosphate synthase family. It depends on Mg(2+) as a cofactor.

The catalysed reaction is 2-[(2R,5Z)-2-carboxy-4-methylthiazol-5(2H)-ylidene]ethyl phosphate + 4-amino-2-methyl-5-(diphosphooxymethyl)pyrimidine + 2 H(+) = thiamine phosphate + CO2 + diphosphate. It carries out the reaction 2-(2-carboxy-4-methylthiazol-5-yl)ethyl phosphate + 4-amino-2-methyl-5-(diphosphooxymethyl)pyrimidine + 2 H(+) = thiamine phosphate + CO2 + diphosphate. The enzyme catalyses 4-methyl-5-(2-phosphooxyethyl)-thiazole + 4-amino-2-methyl-5-(diphosphooxymethyl)pyrimidine + H(+) = thiamine phosphate + diphosphate. The protein operates within cofactor biosynthesis; thiamine diphosphate biosynthesis; thiamine phosphate from 4-amino-2-methyl-5-diphosphomethylpyrimidine and 4-methyl-5-(2-phosphoethyl)-thiazole: step 1/1. Functionally, condenses 4-methyl-5-(beta-hydroxyethyl)thiazole monophosphate (THZ-P) and 2-methyl-4-amino-5-hydroxymethyl pyrimidine pyrophosphate (HMP-PP) to form thiamine monophosphate (TMP). This Thermoplasma acidophilum (strain ATCC 25905 / DSM 1728 / JCM 9062 / NBRC 15155 / AMRC-C165) protein is Thiamine-phosphate synthase.